The primary structure comprises 131 residues: MSVSQTIVGNGRKIVSFNLQGIDKVLPYIAKRIAWAAKLSGIKTVGPLPLPSTSRQWTVNKSPHTDKHSRDQYEMKVNKRLVQIDAPVQTADMFVKFVQTKLPPISATVDIKIEERVYLPTEDFYSDKRIA.

The protein belongs to the universal ribosomal protein uS10 family.

The protein localises to the mitochondrion. The chain is Small ribosomal subunit protein uS10m (mrps10) from Dictyostelium discoideum (Social amoeba).